A 510-amino-acid chain; its full sequence is NAD(P)H-quinone oxidoreductase subunit 2 B, chloroplastic (510 aa).

12 consecutive transmembrane segments (helical) span residues 24–44, 59–79, 99–119, 124–144, 149–169, 183–203, 229–249, 295–315, 323–343, 354–374, 395–415, and 418–438; these read LLLF…GLIL, WFYF…LFRW, IFQF…VEYI, MAIT…MFLC, LITI…LSGY, YLLM…WLYG, ISIA…PAPF, WHLL…LLAI, MLAY…IVGD, YMLF…LFGL, ALSL…AGFF, and LYLF…IGLL.

It belongs to the complex I subunit 2 family. NDH is composed of at least 16 different subunits, 5 of which are encoded in the nucleus.

It localises to the plastid. The protein resides in the chloroplast thylakoid membrane. It catalyses the reaction a plastoquinone + NADH + (n+1) H(+)(in) = a plastoquinol + NAD(+) + n H(+)(out). The enzyme catalyses a plastoquinone + NADPH + (n+1) H(+)(in) = a plastoquinol + NADP(+) + n H(+)(out). NDH shuttles electrons from NAD(P)H:plastoquinone, via FMN and iron-sulfur (Fe-S) centers, to quinones in the photosynthetic chain and possibly in a chloroplast respiratory chain. The immediate electron acceptor for the enzyme in this species is believed to be plastoquinone. Couples the redox reaction to proton translocation, and thus conserves the redox energy in a proton gradient. The protein is NAD(P)H-quinone oxidoreductase subunit 2 B, chloroplastic of Lolium perenne (Perennial ryegrass).